The sequence spans 474 residues: Replication factor C large subunit (474 aa).

45-52 (GPPGCGKT) is a binding site for ATP. Positions 415–468 (DKKTNNKKGKENKTKNTTKKIKEIKETPKKEEVKEPKKQIEKQKSEKKEPKKQM) are enriched in basic and acidic residues. Residues 415-474 (DKKTNNKKGKENKTKNTTKKIKEIKETPKKEEVKEPKKQIEKQKSEKKEPKKQMTLESFF) are disordered.

This sequence belongs to the activator 1 small subunits family. RfcL subfamily. Heteromultimer composed of small subunits (RfcS) and large subunits (RfcL).

Functionally, part of the RFC clamp loader complex which loads the PCNA sliding clamp onto DNA. The sequence is that of Replication factor C large subunit from Methanococcus aeolicus (strain ATCC BAA-1280 / DSM 17508 / OCM 812 / Nankai-3).